Consider the following 344-residue polypeptide: N-acetyl-gamma-glutamyl-phosphate reductase (344 aa).

Residue Cys148 is part of the active site.

Belongs to the NAGSA dehydrogenase family. Type 1 subfamily.

It is found in the cytoplasm. The catalysed reaction is N-acetyl-L-glutamate 5-semialdehyde + phosphate + NADP(+) = N-acetyl-L-glutamyl 5-phosphate + NADPH + H(+). It participates in amino-acid biosynthesis; L-arginine biosynthesis; N(2)-acetyl-L-ornithine from L-glutamate: step 3/4. Catalyzes the NADPH-dependent reduction of N-acetyl-5-glutamyl phosphate to yield N-acetyl-L-glutamate 5-semialdehyde. The polypeptide is N-acetyl-gamma-glutamyl-phosphate reductase (Clostridium kluyveri (strain NBRC 12016)).